We begin with the raw amino-acid sequence, 553 residues long: Arginine--tRNA ligase (553 aa).

Positions 123 to 133 match the 'HIGH' region motif; it reads ANPTGPLTIGR.

This sequence belongs to the class-I aminoacyl-tRNA synthetase family. As to quaternary structure, monomer.

It is found in the cytoplasm. It catalyses the reaction tRNA(Arg) + L-arginine + ATP = L-arginyl-tRNA(Arg) + AMP + diphosphate. The chain is Arginine--tRNA ligase from Chlorobium phaeobacteroides (strain BS1).